Reading from the N-terminus, the 461-residue chain is Serine carboxypeptidase-like 51 (461 aa).

A signal peptide spans 1 to 20 (MKTTVVYLVILCLIVSCTNG). Residues asparagine 99 and asparagine 152 are each glycosylated (N-linked (GlcNAc...) asparagine). The active site involves serine 166. Residue asparagine 340 is glycosylated (N-linked (GlcNAc...) asparagine). Active-site residues include aspartate 379 and histidine 438.

It belongs to the peptidase S10 family. In terms of tissue distribution, expressed in seedlings, roots, flowers and siliques.

The protein localises to the secreted. Functionally, probable carboxypeptidase. This is Serine carboxypeptidase-like 51 (SCPL51) from Arabidopsis thaliana (Mouse-ear cress).